A 267-amino-acid chain; its full sequence is 4-diphosphocytidyl-2-C-methyl-D-erythritol kinase (267 aa).

The active site involves Lys8. Pro90–Ser100 contacts ATP. The active site involves Asp132.

This sequence belongs to the GHMP kinase family. IspE subfamily.

It catalyses the reaction 4-CDP-2-C-methyl-D-erythritol + ATP = 4-CDP-2-C-methyl-D-erythritol 2-phosphate + ADP + H(+). Its pathway is isoprenoid biosynthesis; isopentenyl diphosphate biosynthesis via DXP pathway; isopentenyl diphosphate from 1-deoxy-D-xylulose 5-phosphate: step 3/6. Its function is as follows. Catalyzes the phosphorylation of the position 2 hydroxy group of 4-diphosphocytidyl-2C-methyl-D-erythritol. The sequence is that of 4-diphosphocytidyl-2-C-methyl-D-erythritol kinase from Azobacteroides pseudotrichonymphae genomovar. CFP2.